Here is a 109-residue protein sequence, read N- to C-terminus: MINYLWFVLAAFCEIAGCYAFYLWLRLGKSALWVLPGLLSLSLFALLLTRVEASYAGRAYAAYGGIYVAASLFWLAFVERSRPLWSDWLGVALCVLGASIVLFGPRLSQ.

4 helical membrane passes run 5–25 (LWFV…YLWL), 27–47 (LGKS…FALL), 59–79 (AYAA…AFVE), and 84–104 (LWSD…VLFG).

It belongs to the UPF0060 family.

The protein resides in the cell inner membrane. This is UPF0060 membrane protein PSPA7_1846 from Pseudomonas paraeruginosa (strain DSM 24068 / PA7) (Pseudomonas aeruginosa (strain PA7)).